A 541-amino-acid polypeptide reads, in one-letter code: Circadian clock oscillator protein KaiC (541 aa).

The tract at residues Met-1–Pro-40 is disordered. KaiC domains follow at residues Ser-21–Phe-268 and Val-282–Leu-541. Basic and acidic residues predominate over residues Pro-26–Glu-35. ATP contacts are provided by Gly-70, Thr-71, Gly-72, Lys-73, Thr-74, Leu-75, Ser-110, Lys-245, Leu-246, Arg-247, Thr-249, His-251, Thr-261, Thr-311, Gly-312, Thr-313, Gly-314, Lys-315, and Thr-316. Thr-74 is a Mg(2+) binding site. Thr-316 and Glu-339 together coordinate Mg(2+). Trp-352 serves as a coordination point for ATP. At Ser-452 the chain carries Phosphoserine; by autocatalysis. A Phosphothreonine; by autocatalysis modification is found at Thr-453. ATP is bound by residues Arg-472, Lys-478, Met-479, Arg-480, Ser-482, His-484, and Lys-486.

It belongs to the KaiC family. As to quaternary structure, homohexamer; hexamerization is dependent on ATP-binding. The KaiABC complex composition changes during the circadian cycle to control KaiC phosphorylation. Complexes KaiC(6), KaiA(2-4):KaiC(6), KaiB(6):KaiC(6) and KaiC(6):KaiB(6):KaiA(12) are among the most important forms, many form cooperatively. KaiC interacts with SasA, activating its autokinase function and leading to RpaA activation. Requires Mg(2+) as cofactor. Post-translationally, phosphorylated on serine and threonine residues by autocatalysis. Has a 4 step phosphorylation cycle; the autokinase acts first on Thr-453, then Ser-452. When Ser-452 is modified KaiC switches to an autophosphatase mode, acting first on phospho-Thr-453 then phospho-Ser-452.

The enzyme catalyses L-seryl-[protein] + ATP = O-phospho-L-seryl-[protein] + ADP + H(+). It catalyses the reaction L-threonyl-[protein] + ATP = O-phospho-L-threonyl-[protein] + ADP + H(+). The catalysed reaction is ATP + H2O = ADP + phosphate + H(+). The interaction with KaiA enhances its phosphorylation status, while the interaction with KaiB decreases it. Its function is as follows. Central component of the KaiABC oscillator complex, which constitutes the main circadian regulator in cyanobacteria. Complex composition changes during the circadian cycle to control KaiC phosphorylation. KaiA stimulates KaiC autophosphorylation, while KaiB sequesters KaiA, leading to KaiC autodephosphorylation. Clock output pathways impact the RpaA transcriptional regulator. KaiC enhances the autophosphorylation activity of SasA, which then transfers its phosphate group to RpaA to activate it. KaiB and KaiC together enhance the phospho-RpaA dephosphatase activity of CikA. Has a weak, temperature-independent ATPase activity; ATPase activity defines the circadian period. The phosphorylation state of KaiC modulates its ATPase activity and effects KaiB binding. The polypeptide is Circadian clock oscillator protein KaiC (Parathermosynechococcus lividus (Thermostichus lividus)).